The primary structure comprises 302 residues: Nudix hydrolase 22, chloroplastic (302 aa).

Residues 1-25 (MKSGASAASPTAKSFNFGSSRLLAL) constitute a chloroplast transit peptide. One can recognise a Nudix hydrolase domain in the interval 73 to 229 (PKKAAVLICL…DSDYVIWGLT (157 aa)). The short motif at 114 to 135 (KAEEHDKDDGITATREAEEEIG) is the Nudix box element. Glutamate 129 and glutamate 133 together coordinate Mg(2+).

It belongs to the Nudix hydrolase family. Mg(2+) is required as a cofactor. It depends on Mn(2+) as a cofactor. In terms of tissue distribution, expressed in roots, leaves, stems and inflorescences.

It is found in the plastid. Its subcellular location is the chloroplast. Its function is as follows. Probably mediates the hydrolysis of some nucleoside diphosphate derivatives. The protein is Nudix hydrolase 22, chloroplastic (NUDT22) of Arabidopsis thaliana (Mouse-ear cress).